The sequence spans 132 residues: ATP synthase epsilon chain (132 aa).

This sequence belongs to the ATPase epsilon chain family. F-type ATPases have 2 components, CF(1) - the catalytic core - and CF(0) - the membrane proton channel. CF(1) has five subunits: alpha(3), beta(3), gamma(1), delta(1), epsilon(1). CF(0) has three main subunits: a, b and c.

Its subcellular location is the cell inner membrane. Functionally, produces ATP from ADP in the presence of a proton gradient across the membrane. This Anaeromyxobacter sp. (strain K) protein is ATP synthase epsilon chain.